The sequence spans 394 residues: Elongation factor Tu (394 aa).

Residues 10 to 204 form the tr-type G domain; sequence KPHINIGTIG…AVDDNIPTPE (195 aa). The interval 19-26 is G1; the sequence is GHVDHGKT. 19-26 contributes to the GTP binding site; the sequence is GHVDHGKT. Position 26 (Thr26) interacts with Mg(2+). The tract at residues 60 to 64 is G2; it reads GITIN. The segment at 81 to 84 is G3; sequence DCPG. GTP-binding positions include 81 to 85 and 136 to 139; these read DCPGH and NKID. The interval 136–139 is G4; it reads NKID. Residues 174-176 form a G5 region; sequence SAL.

This sequence belongs to the TRAFAC class translation factor GTPase superfamily. Classic translation factor GTPase family. EF-Tu/EF-1A subfamily. Monomer.

It localises to the cytoplasm. The catalysed reaction is GTP + H2O = GDP + phosphate + H(+). GTP hydrolase that promotes the GTP-dependent binding of aminoacyl-tRNA to the A-site of ribosomes during protein biosynthesis. This chain is Elongation factor Tu, found in Chlamydia felis (strain Fe/C-56) (Chlamydophila felis).